Consider the following 380-residue polypeptide: Cytochrome b (380 aa).

The next 4 membrane-spanning stretches (helical) occupy residues 34–54, 78–99, 114–134, and 179–199; these read FGSLLAVCLITQILTGLLLAM, WLIRNLHANGASFFFICIFLHI, WNTGVILLLTLMATAFVGYVL, and FFALHFLLPFVIAGITIIHLT. 2 residues coordinate heme b: His-84 and His-98. The heme b site is built by His-183 and His-197. His-202 lines the a ubiquinone pocket. Transmembrane regions (helical) follow at residues 227 to 247, 289 to 309, 321 to 341, and 348 to 368; these read IKDILGLALMFIPFLTLTLFS, LGGVLALAASVLILLLIPFLH, LSQTLFWLLVANLLILTWIGS, and FIIIGQMASLSYFSILLILFP.

Belongs to the cytochrome b family. In terms of assembly, the cytochrome bc1 complex contains 11 subunits: 3 respiratory subunits (MT-CYB, CYC1 and UQCRFS1), 2 core proteins (UQCRC1 and UQCRC2) and 6 low-molecular weight proteins (UQCRH/QCR6, UQCRB/QCR7, UQCRQ/QCR8, UQCR10/QCR9, UQCR11/QCR10 and a cleavage product of UQCRFS1). This cytochrome bc1 complex then forms a dimer. Heme b is required as a cofactor.

It is found in the mitochondrion inner membrane. In terms of biological role, component of the ubiquinol-cytochrome c reductase complex (complex III or cytochrome b-c1 complex) that is part of the mitochondrial respiratory chain. The b-c1 complex mediates electron transfer from ubiquinol to cytochrome c. Contributes to the generation of a proton gradient across the mitochondrial membrane that is then used for ATP synthesis. This chain is Cytochrome b (MT-CYB), found in Alectoris graeca (Rock partridge).